Reading from the N-terminus, the 493-residue chain is MTELNKLSVADSLKGLKNKEFTSKELVNAHIKQIEKHKNLNAYVTETFDLALKQAEEADQSYAKNHSRTLEGIPFAAKDLFCTKGIRTTACSNILREFIPNYESGVTQNIFNKGGVMLGKTNMDEFAMGSANITSCFGNVISPWKALDDGADLVPGGSSGGSAAAVSGFMATAALGSDTGGSVRQPASFTGLVGFKPTYGRCSRYGMVSFASSLDQAGIFTRSVLDSSIMLEAMIGFDERDSTSIKMEVPQLQPAIGSSIKGMKIGVPLSLGEGGIIEPDIMKMWHSTIELLKDAGAEIIDISLPHAKYGVAVYYVIAPAEASSNLSRYDGVRYGLRVEKENMSLDEMYEITRSSGFGDEVKRRIMIGTYVLSSSFMDAYYLKAQKVRRLVADDFNNAFAKVDAILLPSAPTEAFRIGEKQNDPTIMYLNDLFTIPASLAGLPCVSVPAGLSNRGLPLGMQVICKQLDEYNVLRVASAIEAGVKHIKFEPVGF.

Active-site charge relay system residues include Lys78 and Ser158. Ser182 functions as the Acyl-ester intermediate in the catalytic mechanism.

It belongs to the amidase family. GatA subfamily. As to quaternary structure, heterotrimer of A, B and C subunits.

The enzyme catalyses L-glutamyl-tRNA(Gln) + L-glutamine + ATP + H2O = L-glutaminyl-tRNA(Gln) + L-glutamate + ADP + phosphate + H(+). Functionally, allows the formation of correctly charged Gln-tRNA(Gln) through the transamidation of misacylated Glu-tRNA(Gln) in organisms which lack glutaminyl-tRNA synthetase. The reaction takes place in the presence of glutamine and ATP through an activated gamma-phospho-Glu-tRNA(Gln). The protein is Glutamyl-tRNA(Gln) amidotransferase subunit A of Rickettsia bellii (strain OSU 85-389).